A 1692-amino-acid chain; its full sequence is Protein TOPAZ1 (1692 aa).

3 disordered regions span residues 1–135 (MRRP…PGLD), 600–629 (ELSRRGSEVISNTTEDTQLTSETQSLTGNK), and 894–919 (EPNVAGEHQSTDSKYMETPVKKEPSD). The span at 31–40 (GAAGGCGPEA) shows a compositional bias: gly residues. Residues 95–116 (SDPRGLEAAKEAELPLQTERHT) show a composition bias toward basic and acidic residues. Polar residues predominate over residues 608–627 (VISNTTEDTQLTSETQSLTG). The segment covering 902-919 (QSTDSKYMETPVKKEPSD) has biased composition (basic and acidic residues).

The protein localises to the cytoplasm. It is found in the cytosol. Its function is as follows. Important for normal spermatogenesis and male fertility. Specifically required for progression to the post-meiotic stages of spermatocyte development. Seems to be necessary for normal expression levels of a number of testis-expressed gene transcripts, although its role in this process is unclear. This is Protein TOPAZ1 (TOPAZ1) from Homo sapiens (Human).